Consider the following 839-residue polypeptide: Autophagy-related protein 9A (839 aa).

Alanine 2 is modified (N-acetylalanine). Over 2–61 the chain is Cytoplasmic; the sequence is AQFDTEYQRLEASYSDSPPGEEDLLVHVAEGSKSPWHHIENLDLFFSRVYNLHQKNGFTC. The Tyrosine-based sorting signal signature appears at 8–11; that stretch reads YQRL. A phosphoserine mark is found at serine 14, serine 16, and serine 18. A helical transmembrane segment spans residues 62-84; that stretch reads MLIGEIFELMQFLFVVAFTTFLV. Residues 85-128 are Lumenal-facing; the sequence is SCVDYDILFANKMVNHSLHPTEPVKVTLPDAFLPAQVCSARIQE. N-linked (GlcNAc...) asparagine glycosylation occurs at asparagine 99. Residues 129–154 traverse the membrane as a helical segment; sequence NGSLITILVIAGVFWIHRLIKFIYNI. The Cytoplasmic portion of the chain corresponds to 155-290; it reads CCYWEIHSFY…ELAQRLSNRI (136 aa). Residues 291–301 lie within the membrane without spanning it; that stretch reads LWIGIANFLLC. Residues 302–319 are Cytoplasmic-facing; that stretch reads PLILIWQILYAFFSYAEV. An intramembrane segment occupies 320 to 328; the sequence is LKREPGALG. Over 329-371 the chain is Cytoplasmic; the sequence is ARCWSLYGRCYLRHFNELEHELQSRLNRGYKPASKYMNCFLSP. A helical transmembrane segment spans residues 372 to 397; the sequence is LLTLLAKNGAFFAGSILAVLIALTIY. Over 398–406 the chain is Lumenal; the sequence is DEDVLAVEH. A helical transmembrane segment spans residues 407–424; sequence VLTTVTLLGVTVTVCRSF. Residues 425 to 470 lie on the Cytoplasmic side of the membrane; the sequence is IPDQHMVFCPEQLLRVILAHIHYMPDHWQGNAHRSQTRDEFAQLFQ. Residues 471–480 lie within the membrane without spanning it; it reads YKAVFILEEL. The Cytoplasmic portion of the chain corresponds to 481-483; sequence LSP. The stretch at 484 to 492 is an intramembrane region; that stretch reads IVTPLILIF. The Cytoplasmic portion of the chain corresponds to 493 to 839; it reads CLRPRALEII…DELPPQVHKV (347 aa). A phosphoserine mark is found at serine 656, serine 735, serine 738, serine 741, and serine 828. Disordered regions lie at residues 656–689 and 717–839; these read SPLQ…SSVW and HKQQ…VHKV. Positions 724–736 are enriched in basic and acidic residues; the sequence is EPERHVWHRRESD. Acidic residues-rich tracts occupy residues 737–747 and 823–832; these read ESGESAPEEGG and VPEEGSEDEL.

It belongs to the ATG9 family. As to quaternary structure, homotrimer; forms a homotrimer with a central pore that forms a path between the two membrane leaflets. Interacts (via cytoplasmic its C-terminus) with ATG2A. Interacts with SUPT20H. Interacts (via the tyrosine-based sorting signal motif) with AP4M1; promoting association with the AP-4 complex. Interacts with ARFIP1 and ARFIP2. Interacts with PI4K2A and PI4KB. Interacts with ATG4A; the interaction is direct and promotes ATG9A trafficking. Post-translationally, ufmylated in a DDRGK1 dependent manner.

Its subcellular location is the preautophagosomal structure membrane. It localises to the cytoplasmic vesicle. It is found in the autophagosome membrane. The protein localises to the golgi apparatus. The protein resides in the trans-Golgi network membrane. Its subcellular location is the late endosome membrane. It localises to the recycling endosome membrane. It is found in the endoplasmic reticulum membrane. The protein localises to the mitochondrion membrane. The enzyme catalyses a 1,2-diacyl-sn-glycero-3-phosphocholine(in) = a 1,2-diacyl-sn-glycero-3-phosphocholine(out). It carries out the reaction a 1,2-diacyl-sn-glycero-3-phospho-L-serine(in) = a 1,2-diacyl-sn-glycero-3-phospho-L-serine(out). It catalyses the reaction a 1,2-diacyl-sn-glycero-3-phosphoethanolamine(in) = a 1,2-diacyl-sn-glycero-3-phosphoethanolamine(out). In terms of biological role, phospholipid scramblase involved in autophagy by mediating autophagosomal membrane expansion. Cycles between the preautophagosomal structure/phagophore assembly site (PAS) and the cytoplasmic vesicle pool and supplies membrane for the growing autophagosome. Lipid scramblase activity plays a key role in preautophagosomal structure/phagophore assembly by distributing the phospholipids that arrive through ATG2 (ATG2A or ATG2B) from the cytoplasmic to the luminal leaflet of the bilayer, thereby driving autophagosomal membrane expansion. Also required to supply phosphatidylinositol 4-phosphate to the autophagosome initiation site by recruiting the phosphatidylinositol 4-kinase beta (PI4KB) in a process dependent on ARFIP2, but not ARFIP1. In addition to autophagy, also plays a role in necrotic cell death. The sequence is that of Autophagy-related protein 9A from Rattus norvegicus (Rat).